Here is a 590-residue protein sequence, read N- to C-terminus: DNA primase (590 aa).

The CHC2-type zinc finger occupies C37 to C61. Residues G255 to P337 form the Toprim domain. Mg(2+)-binding residues include E261, D305, and D307.

It belongs to the DnaG primase family. Monomer. Interacts with DnaB. The cofactor is Zn(2+). It depends on Mg(2+) as a cofactor.

It carries out the reaction ssDNA + n NTP = ssDNA/pppN(pN)n-1 hybrid + (n-1) diphosphate.. RNA polymerase that catalyzes the synthesis of short RNA molecules used as primers for DNA polymerase during DNA replication. The sequence is that of DNA primase from Neisseria meningitidis serogroup A / serotype 4A (strain DSM 15465 / Z2491).